A 338-amino-acid chain; its full sequence is Isopenicillin N synthase (338 aa).

Isopenicillin N-binding residues include arginine 89, tyrosine 93, serine 185, and tyrosine 191. Residues arginine 89, tyrosine 93, serine 185, tyrosine 191, histidine 216, and aspartate 218 each coordinate N-[(5S)-5-amino-5-carboxypentanoyl]-L-cysteinyl-D-valine. Positions 182 to 290 (TLSSVVLIRY…RQSLPFFVNL (109 aa)) constitute a Fe2OG dioxygenase domain. Residues histidine 216, aspartate 218, and histidine 272 each contribute to the Fe(2+) site. Arginine 281 contributes to the 2-oxoglutarate binding site. Serine 283 contacts isopenicillin N. Serine 283 contributes to the N-[(5S)-5-amino-5-carboxypentanoyl]-L-cysteinyl-D-valine binding site.

This sequence belongs to the iron/ascorbate-dependent oxidoreductase family. Monomer. Fe(2+) serves as cofactor.

It localises to the cytoplasm. It is found in the cytosol. The catalysed reaction is N-[(5S)-5-amino-5-carboxypentanoyl]-L-cysteinyl-D-valine + O2 = isopenicillin N + 2 H2O. It functions in the pathway antibiotic biosynthesis; penicillin G biosynthesis; penicillin G from L-alpha-aminoadipate and L-cysteine and L-valine: step 2/3. Functionally, isopenicillin N synthase; part of the gene cluster that mediates the biosynthesis of penicillin, the world's most important antibiotic. IpnA catalyzes the cyclization of the tripeptide N-[(5S)-5-amino-5-carboxypentanoyl]-L-cysteinyl-D-valine (LLD-ACV or ACV) to form isopenicillin N (IPN) that contains the beta-lactam nucleus. The penicillin biosynthesis occurs via 3 enzymatic steps, the first corresponding to the production of the tripeptide N-[(5S)-5-amino-5-carboxypentanoyl]-L-cysteinyl-D-valine (LLD-ACV or ACV) by the NRPS pcbAB. The tripeptide ACV is then cyclized to isopenicillin N (IPN) by the isopenicillin N synthase pcbC that forms the beta-lactam nucleus. Finally, the alpha-aminoadipyl side chain is exchanged for phenylacetic acid by the isopenicillin N acyltransferase penDE to yield penicillin in the peroxisomal matrix. This is Isopenicillin N synthase (PCBC) from Hapsidospora chrysogena (Acremonium chrysogenum).